A 548-amino-acid chain; its full sequence is Medium/long-chain-fatty-acid--CoA/3-oxocholest-4-en-26-oate--CoA ligase (548 aa).

Residues 174-182 (TGGTTGFPK), aspartate 415, arginine 430, and lysine 521 each bind ATP. The segment covering 520–541 (GKPDYRWAKEQTEARPADDVHA) has biased composition (basic and acidic residues). Residues 520–548 (GKPDYRWAKEQTEARPADDVHAGHVTSGG) are disordered.

Belongs to the ATP-dependent AMP-binding enzyme family.

It carries out the reaction a medium-chain fatty acid + ATP + CoA = a medium-chain fatty acyl-CoA + AMP + diphosphate. It catalyses the reaction a long-chain fatty acid + ATP + CoA = a long-chain fatty acyl-CoA + AMP + diphosphate. The catalysed reaction is (25S)-3-oxocholest-4-en-26-oate + ATP + CoA = (25S)-3-oxocholest-4-en-26-oyl-CoA + AMP + diphosphate. It participates in lipid metabolism; fatty acid biosynthesis. Its pathway is steroid metabolism; cholesterol metabolism. Catalyzes the activation of medium/long-chain fatty acids as acyl-coenzyme A (acyl-CoA), which are then transferred to the multifunctional polyketide synthase (PKS) type III for further chain extension. Also involved in the degradation of cholesterol via the degradation of the side chains of C-24 branched-chain sterols. Catalyzes the ATP-dependent CoA thioesterification of the sterol 3-oxocholest-4-en-26-oate to yield 3-oxocholest-4-en-26-oyl-CoA. This Mycobacterium bovis (strain ATCC BAA-935 / AF2122/97) protein is Medium/long-chain-fatty-acid--CoA/3-oxocholest-4-en-26-oate--CoA ligase.